Here is a 302-residue protein sequence, read N- to C-terminus: 4-hydroxy-tetrahydrodipicolinate synthase (302 aa).

A pyruvate-binding site is contributed by Thr-55. The Proton donor/acceptor role is filled by Tyr-144. Lys-172 serves as the catalytic Schiff-base intermediate with substrate. Position 214 (Val-214) interacts with pyruvate.

Belongs to the DapA family. In terms of assembly, homotetramer; dimer of dimers.

Its subcellular location is the cytoplasm. The catalysed reaction is L-aspartate 4-semialdehyde + pyruvate = (2S,4S)-4-hydroxy-2,3,4,5-tetrahydrodipicolinate + H2O + H(+). It participates in amino-acid biosynthesis; L-lysine biosynthesis via DAP pathway; (S)-tetrahydrodipicolinate from L-aspartate: step 3/4. In terms of biological role, catalyzes the condensation of (S)-aspartate-beta-semialdehyde [(S)-ASA] and pyruvate to 4-hydroxy-tetrahydrodipicolinate (HTPA). The chain is 4-hydroxy-tetrahydrodipicolinate synthase from Synechococcus sp. (strain WH7803).